The sequence spans 426 residues: Serine--tRNA ligase (426 aa).

A disordered region spans residues 36-66 (KRKHLQERTQDLQSQRNTISKEIGQKKAKGE). Over residues 46–55 (DLQSQRNTIS) the composition is skewed to polar residues. 233–235 (TAE) provides a ligand contact to L-serine. An ATP-binding site is contributed by 264-266 (RSE). Glu287 serves as a coordination point for L-serine. 351-354 (EISS) lines the ATP pocket. Ser387 contributes to the L-serine binding site.

The protein belongs to the class-II aminoacyl-tRNA synthetase family. Type-1 seryl-tRNA synthetase subfamily. In terms of assembly, homodimer. The tRNA molecule binds across the dimer.

The protein localises to the cytoplasm. The catalysed reaction is tRNA(Ser) + L-serine + ATP = L-seryl-tRNA(Ser) + AMP + diphosphate + H(+). The enzyme catalyses tRNA(Sec) + L-serine + ATP = L-seryl-tRNA(Sec) + AMP + diphosphate + H(+). Its pathway is aminoacyl-tRNA biosynthesis; selenocysteinyl-tRNA(Sec) biosynthesis; L-seryl-tRNA(Sec) from L-serine and tRNA(Sec): step 1/1. Catalyzes the attachment of serine to tRNA(Ser). Is also able to aminoacylate tRNA(Sec) with serine, to form the misacylated tRNA L-seryl-tRNA(Sec), which will be further converted into selenocysteinyl-tRNA(Sec). This Francisella tularensis subsp. holarctica (strain FTNF002-00 / FTA) protein is Serine--tRNA ligase.